The primary structure comprises 219 residues: Large ribosomal subunit protein bL25 (219 aa).

The segment at 193–219 (VSSTELEETPEVPASAVPTTDQGESAE) is disordered. Residues 209 to 219 (VPTTDQGESAE) are compositionally biased toward polar residues.

Belongs to the bacterial ribosomal protein bL25 family. CTC subfamily. As to quaternary structure, part of the 50S ribosomal subunit; part of the 5S rRNA/L5/L18/L25 subcomplex. Contacts the 5S rRNA. Binds to the 5S rRNA independently of L5 and L18.

In terms of biological role, this is one of the proteins that binds to the 5S RNA in the ribosome where it forms part of the central protuberance. In Legionella pneumophila (strain Corby), this protein is Large ribosomal subunit protein bL25.